The primary structure comprises 224 residues: Propanediol dehydratase medium subunit (224 aa).

Residues 1 to 18 (MEINEKLLRQIIEDVLRD) form a targets protein to the BMC region.

It belongs to the diol/glycerol dehydratase medium subunit family. As to quaternary structure, the propanediol dehydratase enzyme is a heterotrimeric complex composed of a large (PduC), a medium (PduD) and a small (PduE) subunit. It depends on adenosylcob(III)alamin as a cofactor.

It localises to the bacterial microcompartment. It carries out the reaction propane-1,2-diol = propanal + H2O. The protein operates within polyol metabolism; 1,2-propanediol degradation. Its activity is regulated as follows. Inhibited by glycerol. Part of the PduCDE complex that catalyzes the dehydration of 1,2-propanediol (1,2-PD) to propionaldehyde. Required for S.typhimurium growth on 1,2-PD as the sole carbon and energy source. This subunit is directly targeted to the bacterial microcompartment (BMC) dedicated to 1,2-PD degradation, and is also responsible for targeting the other 2 subunits (pduC and pduE). In terms of biological role, the 1,2-PD-specific bacterial microcompartment (BMC) concentrates low levels of 1,2-PD catabolic enzymes, concentrates volatile reaction intermediates thus enhancing pathway flux and keeps the level of toxic, mutagenic propionaldehyde low. This chain is Propanediol dehydratase medium subunit, found in Salmonella typhimurium (strain LT2 / SGSC1412 / ATCC 700720).